Consider the following 459-residue polypeptide: ATP-dependent protease ATPase subunit HslU (459 aa).

ATP contacts are provided by residues V26, 68-73 (GVGKTE), D271, E337, and R409.

It belongs to the ClpX chaperone family. HslU subfamily. As to quaternary structure, a double ring-shaped homohexamer of HslV is capped on each side by a ring-shaped HslU homohexamer. The assembly of the HslU/HslV complex is dependent on binding of ATP.

It localises to the cytoplasm. Its function is as follows. ATPase subunit of a proteasome-like degradation complex; this subunit has chaperone activity. The binding of ATP and its subsequent hydrolysis by HslU are essential for unfolding of protein substrates subsequently hydrolyzed by HslV. HslU recognizes the N-terminal part of its protein substrates and unfolds these before they are guided to HslV for hydrolysis. This chain is ATP-dependent protease ATPase subunit HslU, found in Xylella fastidiosa (strain 9a5c).